The chain runs to 316 residues: 4-hydroxy-3-methylbut-2-enyl diphosphate reductase (316 aa).

Cys12 is a binding site for [4Fe-4S] cluster. (2E)-4-hydroxy-3-methylbut-2-enyl diphosphate is bound by residues His43 and His81. Positions 43 and 81 each coordinate dimethylallyl diphosphate. Positions 43 and 81 each coordinate isopentenyl diphosphate. Residue Cys103 coordinates [4Fe-4S] cluster. His131 contributes to the (2E)-4-hydroxy-3-methylbut-2-enyl diphosphate binding site. Dimethylallyl diphosphate is bound at residue His131. His131 contacts isopentenyl diphosphate. Residue Glu133 is the Proton donor of the active site. A (2E)-4-hydroxy-3-methylbut-2-enyl diphosphate-binding site is contributed by Thr170. Cys198 provides a ligand contact to [4Fe-4S] cluster. Residues Ser226, Asn228, and Ser271 each coordinate (2E)-4-hydroxy-3-methylbut-2-enyl diphosphate. Residues Ser226, Asn228, and Ser271 each coordinate dimethylallyl diphosphate. Isopentenyl diphosphate-binding residues include Ser226, Asn228, and Ser271.

This sequence belongs to the IspH family. [4Fe-4S] cluster is required as a cofactor.

The enzyme catalyses isopentenyl diphosphate + 2 oxidized [2Fe-2S]-[ferredoxin] + H2O = (2E)-4-hydroxy-3-methylbut-2-enyl diphosphate + 2 reduced [2Fe-2S]-[ferredoxin] + 2 H(+). The catalysed reaction is dimethylallyl diphosphate + 2 oxidized [2Fe-2S]-[ferredoxin] + H2O = (2E)-4-hydroxy-3-methylbut-2-enyl diphosphate + 2 reduced [2Fe-2S]-[ferredoxin] + 2 H(+). It participates in isoprenoid biosynthesis; dimethylallyl diphosphate biosynthesis; dimethylallyl diphosphate from (2E)-4-hydroxy-3-methylbutenyl diphosphate: step 1/1. It functions in the pathway isoprenoid biosynthesis; isopentenyl diphosphate biosynthesis via DXP pathway; isopentenyl diphosphate from 1-deoxy-D-xylulose 5-phosphate: step 6/6. Catalyzes the conversion of 1-hydroxy-2-methyl-2-(E)-butenyl 4-diphosphate (HMBPP) into a mixture of isopentenyl diphosphate (IPP) and dimethylallyl diphosphate (DMAPP). Acts in the terminal step of the DOXP/MEP pathway for isoprenoid precursor biosynthesis. The protein is 4-hydroxy-3-methylbut-2-enyl diphosphate reductase of Geobacillus kaustophilus (strain HTA426).